A 238-amino-acid chain; its full sequence is Putative tyrosine-protein phosphatase OCA1 (238 aa).

The tract at residues 1–43 (MTSKVGEYEDVPEDESRLTEENVSVPEEEVEDEDEEEDDDDDH) is disordered. Thr2 is subject to N-acetylthreonine. Ser24 carries the post-translational modification Phosphoserine. A compositionally biased stretch (acidic residues) spans 26–42 (PEEEVEDEDEEEDDDDD). One can recognise a Tyrosine-protein phosphatase domain in the interval 72–230 (NFCPVERYLY…LVKIDKNKAP (159 aa)). Cys168 acts as the Phosphocysteine intermediate in catalysis.

The protein belongs to the protein-tyrosine phosphatase family.

It localises to the cytoplasm. The catalysed reaction is O-phospho-L-tyrosyl-[protein] + H2O = L-tyrosyl-[protein] + phosphate. Functionally, putative tyrosine-protein phosphatase required for protection against superoxide stress. Involved in cell-cycle delay in response to linoleic acid hydroperoxide (LoaOOH). The chain is Putative tyrosine-protein phosphatase OCA1 (OCA1) from Saccharomyces cerevisiae (strain YJM789) (Baker's yeast).